The sequence spans 415 residues: D-galactonate dehydratase family member RspA (415 aa).

Residues asparagine 48 and histidine 133 each contribute to the substrate site. The Proton donor/acceptor role is filled by tyrosine 170. Aspartate 223 serves as a coordination point for Mg(2+). The Proton donor/acceptor role is filled by histidine 225. Mg(2+) contacts are provided by glutamate 249 and glutamate 275. Substrate-binding residues include glutamate 275, arginine 296, histidine 325, aspartate 329, and glutamate 352.

It belongs to the mandelate racemase/muconate lactonizing enzyme family. GalD subfamily. The cofactor is Mg(2+).

It carries out the reaction D-mannonate = 2-dehydro-3-deoxy-D-gluconate + H2O. Has low D-mannonate dehydratase activity (in vitro), suggesting that this is not a physiological substrate and that it has no significant role in D-mannonate degradation in vivo. Has no detectable activity with a panel of 70 other acid sugars (in vitro). In Escherichia coli (strain MS 21-1), this protein is D-galactonate dehydratase family member RspA (rspA).